A 190-amino-acid chain; its full sequence is UPF0200 protein TGAM_0868 (190 aa).

Residue 7 to 14 (GMPGSGKS) participates in ATP binding.

It belongs to the UPF0200 family.

This is UPF0200 protein TGAM_0868 from Thermococcus gammatolerans (strain DSM 15229 / JCM 11827 / EJ3).